A 616-amino-acid chain; its full sequence is Chaperone protein HtpG (616 aa).

An a; substrate-binding region spans residues 1–333 (MKKQFDTEVN…CQDLPLNVSR (333 aa)). The b stretch occupies residues 334–542 (EILQQNKILS…SNDPTYQMQK (209 aa)). A c region spans residues 543–616 (IMLSMGQEVK…INEFIEKDFL (74 aa)).

The protein belongs to the heat shock protein 90 family. In terms of assembly, homodimer.

The protein resides in the cytoplasm. Functionally, molecular chaperone. Has ATPase activity. This chain is Chaperone protein HtpG, found in Borreliella burgdorferi (strain ATCC 35210 / DSM 4680 / CIP 102532 / B31) (Borrelia burgdorferi).